An 838-amino-acid polypeptide reads, in one-letter code: Protein kintoun (838 aa).

5 disordered regions span residues 106 to 125 (RPKN…LNWS), 212 to 238 (NPTA…GKPE), 370 to 411 (LRHF…TSSP), 557 to 696 (NAPL…DSCS), and 776 to 838 (QQRR…EMDD). Residues 114–125 (DPSSGSRGLNWS) show a composition bias toward polar residues. Over residues 370–380 (LRHFSREDSGV) the composition is skewed to basic and acidic residues. Position 378 is a phosphoserine (Ser378). Residues 389 to 398 (PVEEDPDGEL) show a composition bias toward acidic residues. Basic and acidic residues predominate over residues 557–572 (NAPLDVEFERNQEGHA). Acidic residues predominate over residues 583–592 (EEEEEEEDKE). A compositionally biased stretch (low complexity) spans 601–611 (DQQQQQQVQNK). Composition is skewed to basic residues over residues 612–623 (KSGKKQRKRNKK) and 673–683 (RSHRGILKRFS). At Ser781 the chain carries Phosphoserine. Residues 789 to 802 (EETRGSALKQKENP) show a composition bias toward basic and acidic residues.

It belongs to the PIH1 family. Kintoun subfamily. In terms of assembly, interacts with Pp1alpha-96A, Pp1-87B, Pp1-13C and flw.

It is found in the cytoplasm. In terms of biological role, required for cytoplasmic pre-assembly of axonemal dyneins, thereby playing a central role in motility in cilia and flagella. Involved in pre-assembly of dynein arm complexes in the cytoplasm before intraflagellar transport loads them for the ciliary compartment. This is Protein kintoun from Drosophila sechellia (Fruit fly).